The sequence spans 283 residues: Bifunctional protein FolD (283 aa).

NADP(+) contacts are provided by residues glycine 165–serine 167 and serine 190.

The protein belongs to the tetrahydrofolate dehydrogenase/cyclohydrolase family. In terms of assembly, homodimer.

The enzyme catalyses (6R)-5,10-methylene-5,6,7,8-tetrahydrofolate + NADP(+) = (6R)-5,10-methenyltetrahydrofolate + NADPH. The catalysed reaction is (6R)-5,10-methenyltetrahydrofolate + H2O = (6R)-10-formyltetrahydrofolate + H(+). Its pathway is one-carbon metabolism; tetrahydrofolate interconversion. In terms of biological role, catalyzes the oxidation of 5,10-methylenetetrahydrofolate to 5,10-methenyltetrahydrofolate and then the hydrolysis of 5,10-methenyltetrahydrofolate to 10-formyltetrahydrofolate. This Paracidovorax citrulli (strain AAC00-1) (Acidovorax citrulli) protein is Bifunctional protein FolD.